A 347-amino-acid chain; its full sequence is Quinolinate synthase (347 aa).

2 residues coordinate iminosuccinate: H47 and S68. C113 contacts [4Fe-4S] cluster. Iminosuccinate-binding positions include 139–141 (YAN) and S156. Residue C200 participates in [4Fe-4S] cluster binding. Iminosuccinate-binding positions include 226-228 (HPE) and T243. [4Fe-4S] cluster is bound at residue C297.

The protein belongs to the quinolinate synthase family. Type 1 subfamily. [4Fe-4S] cluster is required as a cofactor.

Its subcellular location is the cytoplasm. It catalyses the reaction iminosuccinate + dihydroxyacetone phosphate = quinolinate + phosphate + 2 H2O + H(+). Its pathway is cofactor biosynthesis; NAD(+) biosynthesis; quinolinate from iminoaspartate: step 1/1. In terms of biological role, catalyzes the condensation of iminoaspartate with dihydroxyacetone phosphate to form quinolinate. The polypeptide is Quinolinate synthase (Shigella flexneri serotype 5b (strain 8401)).